The chain runs to 703 residues: Phenylalanine aminomutase (L-beta-phenylalanine forming) (703 aa).

Tyrosine 79 acts as the Proton donor/acceptor in catalysis. Positions 177 to 179 form a cross-link, 5-imidazolinone (Ala-Gly); the sequence is ASG. Residue serine 178 is modified to 2,3-didehydroalanine (Ser).

This sequence belongs to the PAL/histidase family. Post-translationally, contains an active site 4-methylidene-imidazol-5-one (MIO), which is formed autocatalytically by cyclization and dehydration of residues Ala-Ser-Gly.

It carries out the reaction L-phenylalanine = L-beta-phenylalanine. Its pathway is mycotoxin biosynthesis. In terms of biological role, phenylalanine aminomutase; part of the gene cluster that mediates the biosynthesis of the mycotoxin cyclochlorotine, a hepatotoxic and carcinogenic cyclic chlorinated pentapeptide. Within the pathway, cctP1 provides the uncommon building block beta-Phe from Phe. The NRPS cctN initially catalyzes the condensation of L-serine (Ser), Pro, L-2-aminobutyrate (2Abu), Ser, and beta-Phe in this order to produce isocyclotine. After the dichlorination of Pro2 catalyzed by cctP2 to produce isocyclochlorotine, the cctO-mediated transacylation of isocyclochlorotine can furnish cyclochlorotine. The subsequent hydroxylation of cyclochlorotine by cctR yields hydroxycyclochlorotine as the final product. CctP1 probably acts as a phenylalanine aminomutase and provides the uncommon building block beta-Phe. Furthermore, 2Abu can be synthesized from threonine by one of the threonine dehydratases and transaminases localized outside of the cluster. The functions of the remaining proteins encoded by the cluster, cctM and cctT, have not been identified yet. This chain is Phenylalanine aminomutase (L-beta-phenylalanine forming), found in Talaromyces islandicus (Penicillium islandicum).